The following is a 507-amino-acid chain: ATP synthase subunit alpha, chloroplastic (507 aa).

170-177 (GDRQTGKT) contributes to the ATP binding site.

The protein belongs to the ATPase alpha/beta chains family. As to quaternary structure, F-type ATPases have 2 components, CF(1) - the catalytic core - and CF(0) - the membrane proton channel. CF(1) has five subunits: alpha(3), beta(3), gamma(1), delta(1), epsilon(1). CF(0) has four main subunits: a, b, b' and c.

The protein resides in the plastid. It localises to the chloroplast thylakoid membrane. The catalysed reaction is ATP + H2O + 4 H(+)(in) = ADP + phosphate + 5 H(+)(out). Its function is as follows. Produces ATP from ADP in the presence of a proton gradient across the membrane. The alpha chain is a regulatory subunit. The sequence is that of ATP synthase subunit alpha, chloroplastic from Acorus calamus var. americanus (American sweet flag).